Here is a 294-residue protein sequence, read N- to C-terminus: Undecaprenyl-diphosphatase (294 aa).

9 helical membrane-spanning segments follow: residues 2 to 22 (SMIY…SLIL), 27 to 47 (LVFS…PISS), 65 to 85 (VIAF…KIFW), 110 to 130 (LCIR…MIFY), 135 to 155 (LIFE…FLLV), 172 to 192 (ITYL…WPGF), 215 to 235 (FSFF…LYHY), 239 to 259 (IGLM…FIAL), and 272 to 292 (VSLI…YWGL).

The protein belongs to the UppP family.

The protein localises to the cell inner membrane. It catalyses the reaction di-trans,octa-cis-undecaprenyl diphosphate + H2O = di-trans,octa-cis-undecaprenyl phosphate + phosphate + H(+). Its function is as follows. Catalyzes the dephosphorylation of undecaprenyl diphosphate (UPP). Confers resistance to bacitracin. This chain is Undecaprenyl-diphosphatase, found in Blochmanniella pennsylvanica (strain BPEN).